We begin with the raw amino-acid sequence, 360 residues long: Phospho-N-acetylmuramoyl-pentapeptide-transferase (360 aa).

Helical transmembrane passes span 26-46, 70-90, 94-114, 132-152, 168-188, 199-219, 239-259, 263-283, 288-308, and 338-358; these read AIMS…RLIA, GTPT…ALLW, SNPY…VGFV, WKYF…YMHG, VMPQ…VGTS, GLAI…AWAT, LVVL…FNTY, VFMG…IAVL, LLLV…ILQV, and VIVR…ATLK.

This sequence belongs to the glycosyltransferase 4 family. MraY subfamily. The cofactor is Mg(2+).

The protein localises to the cell inner membrane. The catalysed reaction is UDP-N-acetyl-alpha-D-muramoyl-L-alanyl-gamma-D-glutamyl-meso-2,6-diaminopimeloyl-D-alanyl-D-alanine + di-trans,octa-cis-undecaprenyl phosphate = di-trans,octa-cis-undecaprenyl diphospho-N-acetyl-alpha-D-muramoyl-L-alanyl-D-glutamyl-meso-2,6-diaminopimeloyl-D-alanyl-D-alanine + UMP. It participates in cell wall biogenesis; peptidoglycan biosynthesis. In terms of biological role, catalyzes the initial step of the lipid cycle reactions in the biosynthesis of the cell wall peptidoglycan: transfers peptidoglycan precursor phospho-MurNAc-pentapeptide from UDP-MurNAc-pentapeptide onto the lipid carrier undecaprenyl phosphate, yielding undecaprenyl-pyrophosphoryl-MurNAc-pentapeptide, known as lipid I. This chain is Phospho-N-acetylmuramoyl-pentapeptide-transferase, found in Photobacterium profundum (strain SS9).